A 1136-amino-acid polypeptide reads, in one-letter code: Carbamoyl phosphate synthase large chain (1136 aa).

A carboxyphosphate synthetic domain region spans residues 1–402 (MPKRTDIKSV…SLGKAMRSID (402 aa)). Residues arginine 129, arginine 169, glycine 175, glycine 176, glutamate 208, isoleucine 210, glutamate 215, glycine 241, valine 242, histidine 243, glutamine 285, and glutamate 299 each contribute to the ATP site. The ATP-grasp 1 domain maps to 133-328 (KKVVKEAGAE…IAKIATKLAL (196 aa)). Residues glutamine 285, glutamate 299, and asparagine 301 each contribute to the Mg(2+) site. Glutamine 285, glutamate 299, and asparagine 301 together coordinate Mn(2+). The tract at residues 403-551 (KRHMGFSWDG…YYYSCYADET (149 aa)) is oligomerization domain. Positions 552-962 (ELRKREREAV…AFAKSQLASY (411 aa)) are carbamoyl phosphate synthetic domain. The ATP-grasp 2 domain occupies 681–881 (GEVLRQEHLN…LAKAAARIMA (201 aa)). ATP is bound by residues arginine 717, lysine 765, leucine 767, glutamate 772, glycine 797, valine 798, histidine 799, serine 800, glutamine 840, and glutamate 852. Mg(2+) is bound by residues glutamine 840, glutamate 852, and asparagine 854. Mn(2+) is bound by residues glutamine 840, glutamate 852, and asparagine 854. Positions 963 to 1136 (EGGLPTNGNV…KEEGEEARAQ (174 aa)) are allosteric domain. The 159-residue stretch at 964 to 1122 (GGLPTNGNVF…QEHSRELYEL (159 aa)) folds into the MGS-like domain.

It belongs to the CarB family. As to quaternary structure, composed of two chains; the small (or glutamine) chain promotes the hydrolysis of glutamine to ammonia, which is used by the large (or ammonia) chain to synthesize carbamoyl phosphate. Tetramer of heterodimers (alpha,beta)4. It depends on Mg(2+) as a cofactor. Mn(2+) is required as a cofactor.

The enzyme catalyses hydrogencarbonate + L-glutamine + 2 ATP + H2O = carbamoyl phosphate + L-glutamate + 2 ADP + phosphate + 2 H(+). It catalyses the reaction hydrogencarbonate + NH4(+) + 2 ATP = carbamoyl phosphate + 2 ADP + phosphate + 2 H(+). The protein operates within amino-acid biosynthesis; L-arginine biosynthesis; carbamoyl phosphate from bicarbonate: step 1/1. Its pathway is pyrimidine metabolism; UMP biosynthesis via de novo pathway; (S)-dihydroorotate from bicarbonate: step 1/3. In terms of biological role, large subunit of the glutamine-dependent carbamoyl phosphate synthetase (CPSase). CPSase catalyzes the formation of carbamoyl phosphate from the ammonia moiety of glutamine, carbonate, and phosphate donated by ATP, constituting the first step of 2 biosynthetic pathways, one leading to arginine and/or urea and the other to pyrimidine nucleotides. The large subunit (synthetase) binds the substrates ammonia (free or transferred from glutamine from the small subunit), hydrogencarbonate and ATP and carries out an ATP-coupled ligase reaction, activating hydrogencarbonate by forming carboxy phosphate which reacts with ammonia to form carbamoyl phosphate. The protein is Carbamoyl phosphate synthase large chain of Bifidobacterium animalis subsp. lactis (strain AD011).